The chain runs to 283 residues: Formamidopyrimidine-DNA glycosylase (283 aa).

The active-site Schiff-base intermediate with DNA is the Pro2. Glu3 serves as the catalytic Proton donor. Lys58 (proton donor; for beta-elimination activity) is an active-site residue. DNA-binding residues include His100, Arg119, and Arg162. Residues 247-283 (DVYGREGEPCRRAGCTGTVTRITQSGRSSFYCGKCQR) form an FPG-type zinc finger. Arg273 functions as the Proton donor; for delta-elimination activity in the catalytic mechanism.

This sequence belongs to the FPG family. As to quaternary structure, monomer. Requires Zn(2+) as cofactor.

It carries out the reaction Hydrolysis of DNA containing ring-opened 7-methylguanine residues, releasing 2,6-diamino-4-hydroxy-5-(N-methyl)formamidopyrimidine.. The enzyme catalyses 2'-deoxyribonucleotide-(2'-deoxyribose 5'-phosphate)-2'-deoxyribonucleotide-DNA = a 3'-end 2'-deoxyribonucleotide-(2,3-dehydro-2,3-deoxyribose 5'-phosphate)-DNA + a 5'-end 5'-phospho-2'-deoxyribonucleoside-DNA + H(+). Its function is as follows. Involved in base excision repair of DNA damaged by oxidation or by mutagenic agents. Acts as a DNA glycosylase that recognizes and removes damaged bases. Has a preference for oxidized purines, such as 7,8-dihydro-8-oxoguanine (8-oxoG). Has AP (apurinic/apyrimidinic) lyase activity and introduces nicks in the DNA strand. Cleaves the DNA backbone by beta-delta elimination to generate a single-strand break at the site of the removed base with both 3'- and 5'-phosphates. This is Formamidopyrimidine-DNA glycosylase from Ruegeria sp. (strain TM1040) (Silicibacter sp.).